The following is a 292-amino-acid chain: UDP-3-O-acyl-N-acetylglucosamine deacetylase (292 aa).

Histidine 75, histidine 231, and aspartate 235 together coordinate Zn(2+). Residue histidine 258 is the Proton donor of the active site.

Belongs to the LpxC family. Zn(2+) serves as cofactor.

The enzyme catalyses a UDP-3-O-[(3R)-3-hydroxyacyl]-N-acetyl-alpha-D-glucosamine + H2O = a UDP-3-O-[(3R)-3-hydroxyacyl]-alpha-D-glucosamine + acetate. It participates in glycolipid biosynthesis; lipid IV(A) biosynthesis; lipid IV(A) from (3R)-3-hydroxytetradecanoyl-[acyl-carrier-protein] and UDP-N-acetyl-alpha-D-glucosamine: step 2/6. Functionally, catalyzes the hydrolysis of UDP-3-O-myristoyl-N-acetylglucosamine to form UDP-3-O-myristoylglucosamine and acetate, the committed step in lipid A biosynthesis. The protein is UDP-3-O-acyl-N-acetylglucosamine deacetylase of Nautilia profundicola (strain ATCC BAA-1463 / DSM 18972 / AmH).